Here is a 382-residue protein sequence, read N- to C-terminus: Dual-specificity RNA methyltransferase RlmN (382 aa).

Residue Glu-96 is the Proton acceptor of the active site. The 241-residue stretch at 102-342 (QGKRGTLCVS…VRTTRGEDID (241 aa)) folds into the Radical SAM core domain. Residues Cys-109 and Cys-345 are joined by a disulfide bond. 3 residues coordinate [4Fe-4S] cluster: Cys-116, Cys-120, and Cys-123. S-adenosyl-L-methionine is bound by residues 170–171 (GE), Ser-202, 224–226 (SLH), and Asn-302. Cys-345 (S-methylcysteine intermediate) is an active-site residue.

It belongs to the radical SAM superfamily. RlmN family. [4Fe-4S] cluster serves as cofactor.

Its subcellular location is the cytoplasm. It catalyses the reaction adenosine(2503) in 23S rRNA + 2 reduced [2Fe-2S]-[ferredoxin] + 2 S-adenosyl-L-methionine = 2-methyladenosine(2503) in 23S rRNA + 5'-deoxyadenosine + L-methionine + 2 oxidized [2Fe-2S]-[ferredoxin] + S-adenosyl-L-homocysteine. The enzyme catalyses adenosine(37) in tRNA + 2 reduced [2Fe-2S]-[ferredoxin] + 2 S-adenosyl-L-methionine = 2-methyladenosine(37) in tRNA + 5'-deoxyadenosine + L-methionine + 2 oxidized [2Fe-2S]-[ferredoxin] + S-adenosyl-L-homocysteine. Functionally, specifically methylates position 2 of adenine 2503 in 23S rRNA and position 2 of adenine 37 in tRNAs. m2A2503 modification seems to play a crucial role in the proofreading step occurring at the peptidyl transferase center and thus would serve to optimize ribosomal fidelity. This is Dual-specificity RNA methyltransferase RlmN from Pseudomonas fluorescens (strain ATCC BAA-477 / NRRL B-23932 / Pf-5).